A 445-amino-acid polypeptide reads, in one-letter code: Exodeoxyribonuclease 7 large subunit (445 aa).

It belongs to the XseA family. Heterooligomer composed of large and small subunits.

It localises to the cytoplasm. It catalyses the reaction Exonucleolytic cleavage in either 5'- to 3'- or 3'- to 5'-direction to yield nucleoside 5'-phosphates.. In terms of biological role, bidirectionally degrades single-stranded DNA into large acid-insoluble oligonucleotides, which are then degraded further into small acid-soluble oligonucleotides. In Xanthomonas oryzae pv. oryzae (strain MAFF 311018), this protein is Exodeoxyribonuclease 7 large subunit.